A 328-amino-acid polypeptide reads, in one-letter code: Malate dehydrogenase (328 aa).

Gly12–Gly18 serves as a coordination point for NAD(+). Arg93 and Arg99 together coordinate substrate. NAD(+)-binding positions include Asn106, Gln113, and Thr130–Asn132. 2 residues coordinate substrate: Asn132 and Arg163. His188 functions as the Proton acceptor in the catalytic mechanism.

The protein belongs to the LDH/MDH superfamily. MDH type 2 family.

The catalysed reaction is (S)-malate + NAD(+) = oxaloacetate + NADH + H(+). In terms of biological role, catalyzes the reversible oxidation of malate to oxaloacetate. The chain is Malate dehydrogenase from Kocuria rhizophila (strain ATCC 9341 / DSM 348 / NBRC 103217 / DC2201).